Consider the following 244-residue polypeptide: 7-cyano-7-deazaguanine synthase (244 aa).

Residue 14–24 (FSGGQDSATCV) participates in ATP binding. Zn(2+) contacts are provided by Cys-202, Cys-217, Cys-220, and Cys-223.

It belongs to the QueC family. Zn(2+) serves as cofactor.

The catalysed reaction is 7-carboxy-7-deazaguanine + NH4(+) + ATP = 7-cyano-7-deazaguanine + ADP + phosphate + H2O + H(+). The protein operates within purine metabolism; 7-cyano-7-deazaguanine biosynthesis. Its function is as follows. Catalyzes the ATP-dependent conversion of 7-carboxy-7-deazaguanine (CDG) to 7-cyano-7-deazaguanine (preQ(0)). The sequence is that of 7-cyano-7-deazaguanine synthase from Burkholderia ambifaria (strain MC40-6).